Consider the following 219-residue polypeptide: Dynein light chain Tctex-type 4 (219 aa).

The interval 1–84 is disordered; the sequence is MAGRPVPAGR…RRPSLGPVPP (84 aa). A compositionally biased stretch (basic and acidic residues) spans 10-20; it reads RQEEELAKDPG. At Ser-64 the chain carries Phosphoserine.

Belongs to the dynein light chain Tctex-type family. In terms of assembly, interacts with ENG/endoglin, TGFBR2 and TGFBR3. Interacts with PPP1CC.

The protein resides in the cell projection. It localises to the cilium. Its subcellular location is the flagellum. The protein localises to the cytoplasmic vesicle. It is found in the secretory vesicle. The protein resides in the acrosome. It localises to the cytoplasm. Its subcellular location is the cytoskeleton. The protein localises to the cilium axoneme. It is found in the nucleus. The protein resides in the microtubule organizing center. This Sus scrofa (Pig) protein is Dynein light chain Tctex-type 4 (DYNLT4).